A 741-amino-acid polypeptide reads, in one-letter code: DNA ligase (741 aa).

Residues 78-82 (DADYD), 127-128 (SL), and Glu161 each bind NAD(+). Lys163 (N6-AMP-lysine intermediate) is an active-site residue. 4 residues coordinate NAD(+): Arg184, Glu219, Lys335, and Lys359. Residues Cys464, Cys467, Cys482, and Cys488 each contribute to the Zn(2+) site. In terms of domain architecture, BRCT spans 662–741 (VGDSPVAGKT…DAWRVLAGLA (80 aa)).

It belongs to the NAD-dependent DNA ligase family. LigA subfamily. Mg(2+) serves as cofactor. It depends on Mn(2+) as a cofactor.

It catalyses the reaction NAD(+) + (deoxyribonucleotide)n-3'-hydroxyl + 5'-phospho-(deoxyribonucleotide)m = (deoxyribonucleotide)n+m + AMP + beta-nicotinamide D-nucleotide.. Its function is as follows. DNA ligase that catalyzes the formation of phosphodiester linkages between 5'-phosphoryl and 3'-hydroxyl groups in double-stranded DNA using NAD as a coenzyme and as the energy source for the reaction. It is essential for DNA replication and repair of damaged DNA. The sequence is that of DNA ligase from Dinoroseobacter shibae (strain DSM 16493 / NCIMB 14021 / DFL 12).